The primary structure comprises 123 residues: PTS system glucitol/sorbitol-specific EIIA component (123 aa).

A PTS EIIA type-5 domain is found at 3–116 (VIYQTTITRI…PDDIAPGSVL (114 aa)). Residue histidine 43 is the Tele-phosphohistidine intermediate of the active site. Residue histidine 43 is modified to Phosphohistidine; by HPr.

Its subcellular location is the cytoplasm. Its function is as follows. The phosphoenolpyruvate-dependent sugar phosphotransferase system (sugar PTS), a major carbohydrate active transport system, catalyzes the phosphorylation of incoming sugar substrates concomitantly with their translocation across the cell membrane. The enzyme II complex composed of SrlA, SrlB and SrlE is involved in glucitol/sorbitol transport. It can also use D-mannitol. The sequence is that of PTS system glucitol/sorbitol-specific EIIA component (srlB) from Escherichia coli (strain K12).